A 345-amino-acid chain; its full sequence is MIKLNNITKIFELPNKKLTALDNVSLNIEKGQICGVIGASGAGKSTLIRCVNLLEKPTSGSVIVDGVELTKLSDRELVLARRQIGMIFQHFNLLSSRTVFENVALPLELESESKAKIQEKITALLDLVGLSEKRDAYPSNLSGGQKQRVAIARALASDPKVLLCDEATSALDPATTQSILQLLKEINRTLGITILLITHEMEVVKQICDQVAVIDQGRLVEQGTVGEIFANPKTELAQEFIRSTFHISLPDEYLENLTDTPKHSKAYPIIKFEFTGRSVDAPLLSQASKKFGVELSILTSQIDYAGGVKFGYTIAEVEGDEDAITQTKVYLMENNVRVEVLGYVQ.

An ABC transporter domain is found at 2-241 (IKLNNITKIF…PKTELAQEFI (240 aa)). 38–45 (GASGAGKS) contributes to the ATP binding site.

This sequence belongs to the ABC transporter superfamily. Methionine importer (TC 3.A.1.24) family. The complex is composed of two ATP-binding proteins (MetN), two transmembrane proteins (MetI) and a solute-binding protein (MetQ).

Its subcellular location is the cell inner membrane. The enzyme catalyses L-methionine(out) + ATP + H2O = L-methionine(in) + ADP + phosphate + H(+). It catalyses the reaction D-methionine(out) + ATP + H2O = D-methionine(in) + ADP + phosphate + H(+). Its function is as follows. Part of the ABC transporter complex MetNIQ involved in methionine import. Responsible for energy coupling to the transport system. In Haemophilus influenzae (strain 86-028NP), this protein is Methionine import ATP-binding protein MetN.